The sequence spans 1001 residues: E3 ubiquitin-protein ligase etc-1 (1001 aa).

Positions 28 to 57 (QEKAARKVQKFWRGHRVQHNQRLLFRAEFD) constitute an IQ domain. A coiled-coil region spans residues 66 to 115 (LEETIKMAQLLVNFYETNKDEERLVMTLSELVKLKTSDKEFEKRIRETQR). Residues 658–1001 (KVNDLKSMVR…INSGAGFELA (344 aa)) form the HECT domain. The active-site Glycyl thioester intermediate is Cys969.

As to quaternary structure, interacts with ify-1 and cyb-1.

It catalyses the reaction S-ubiquitinyl-[E2 ubiquitin-conjugating enzyme]-L-cysteine + [acceptor protein]-L-lysine = [E2 ubiquitin-conjugating enzyme]-L-cysteine + N(6)-ubiquitinyl-[acceptor protein]-L-lysine.. It functions in the pathway protein modification; protein ubiquitination. In terms of biological role, E3 ubiquitin-protein ligase that accepts ubiquitin from E2 ubiquitin-conjugating enzymes, such as ubc-18, in the form of a thioester and then directly transfers the ubiquitin to targeted substrates. Ubiquitinates ify-1 and cyb-1 targeting them for degradation in post-meiotic embryos. This is E3 ubiquitin-protein ligase etc-1 from Caenorhabditis elegans.